We begin with the raw amino-acid sequence, 146 residues long: Large-conductance mechanosensitive channel (146 aa).

2 helical membrane passes run valine 14–leucine 34 and glycine 81–valine 101.

It belongs to the MscL family. In terms of assembly, homopentamer.

It is found in the cell membrane. Functionally, channel that opens in response to stretch forces in the membrane lipid bilayer. May participate in the regulation of osmotic pressure changes within the cell. In Symbiobacterium thermophilum (strain DSM 24528 / JCM 14929 / IAM 14863 / T), this protein is Large-conductance mechanosensitive channel.